Consider the following 498-residue polypeptide: Archaemetzincin-1 (498 aa).

Histidine 261 provides a ligand contact to Zn(2+). The Proton acceptor role is filled by glutamate 262. Residues histidine 265, cysteine 272, cysteine 277, cysteine 296, and cysteine 299 each coordinate Zn(2+). The tract at residues 332 to 381 (QEAGEPSVWEDTPPASADSGMCCESDSEPGTSVSEPLTPDAGSHTFASGP) is disordered.

It belongs to the peptidase M54 family. Zn(2+) is required as a cofactor.

Probable zinc metalloprotease. The protein is Archaemetzincin-1 (AMZ1) of Homo sapiens (Human).